A 120-amino-acid chain; its full sequence is uncharacterized protein (120 aa).

It localises to the mitochondrion. This is an uncharacterized protein from Arabidopsis thaliana (Mouse-ear cress).